The chain runs to 145 residues: Transcriptional anti-antiactivator ExsC (145 aa).

Homodimer. Interacts with ExsE. Interacts directly with ExsD to form a heterotetrameric complex.

The protein localises to the cytoplasm. Its activity is regulated as follows. In the absence of inducing signals, ExsE interacts with and inhibits ExsC activity. Part of the regulatory cascade that plays a role in the transcriptional regulation of the type III secretion system (T3SS). Interacts with antiactivator ExsD to inhibit its activity leading to ExsA-mediated transcription. The polypeptide is Transcriptional anti-antiactivator ExsC (exsC) (Pseudomonas aeruginosa (strain ATCC 15692 / DSM 22644 / CIP 104116 / JCM 14847 / LMG 12228 / 1C / PRS 101 / PAO1)).